Here is a 210-residue protein sequence, read N- to C-terminus: Prohead protease (210 aa).

Positions 1 to 23 (MTQAAIDYNKLKSAPVHLDAYIK) are excised as a propeptide. Active-site residues include H76, S122, and E148. The propeptide occupies 167–210 (SMNGHDYTEWRKSFTAISSKAVPAQERNLSELEKLAIALGYVKE).

The protein belongs to the HK97 prohead protease protein family. Post-translationally, cleaves itself autocatalytically to yield the mature form of the protease.

It localises to the virion. Serine protease involved in capsid assembly and maturation. Cleaves the major capsid protein, the decoration protein, the portal protein to yield mature procapsids competent for DNA packaging. Acts as a trigger for assembly of the capsid protein. The polypeptide is Prohead protease (Escherichia coli (Enterobacteria phage T5)).